The following is a 370-amino-acid chain: MRLLVSGGGTGGHIYPALALIERLKQVEPDTEVLYVGTTRGLENKIVPDAGIELETMHMQGFKRSLSLENFKTIYLFLNSVHHAKKIISEFKPDVVLGTGGYVSGAVLYAAAKKHIPTVIHEQNSVVGVTNKFLSRYVDQIAIAFEAARSQFPADKVTMAGNPRAQQVAAKKDSDFSWTRYDLKDDVPTLMIFGGSQGAPKINKTVVDAIPEFNKRPYQVIFATGQKRYDDVKKQLAEGNIKPADNVKVVPYIKDMPAKMPRVAALVSRAGATTIAEVTALGVPTILIPSPYVTANHQVKNAQALVKNNAGLMITEDKLDARALLTQADKIMEDEEVRKEMAHAAEKMGRPDAADRLIKILHKAIDEHEK.

UDP-N-acetyl-alpha-D-glucosamine contacts are provided by residues 10–12 (TGG), N124, S196, I253, and Q298.

Belongs to the glycosyltransferase 28 family. MurG subfamily.

Its subcellular location is the cell membrane. The enzyme catalyses Mur2Ac(oyl-L-Ala-gamma-D-Glu-L-Lys-D-Ala-D-Ala)-di-trans,octa-cis-undecaprenyl diphosphate + UDP-N-acetyl-alpha-D-glucosamine = beta-D-GlcNAc-(1-&gt;4)-Mur2Ac(oyl-L-Ala-gamma-D-Glu-L-Lys-D-Ala-D-Ala)-di-trans,octa-cis-undecaprenyl diphosphate + UDP + H(+). Its pathway is cell wall biogenesis; peptidoglycan biosynthesis. In terms of biological role, cell wall formation. Catalyzes the transfer of a GlcNAc subunit on undecaprenyl-pyrophosphoryl-MurNAc-pentapeptide (lipid intermediate I) to form undecaprenyl-pyrophosphoryl-MurNAc-(pentapeptide)GlcNAc (lipid intermediate II). The chain is UDP-N-acetylglucosamine--N-acetylmuramyl-(pentapeptide) pyrophosphoryl-undecaprenol N-acetylglucosamine transferase from Limosilactobacillus reuteri subsp. reuteri (strain JCM 1112) (Lactobacillus reuteri).